Reading from the N-terminus, the 252-residue chain is MQYPVDTHTHTLASTHAYSTIHDYLAVAKQKGIRLFATTDHGPAMADAPHFWHFVNLRVLPRMVDGVGILRGIEANIKNREGEIDYFGDYLSQLDIVLAGFHEPVFPPSDKATHTEAMINAIKSGKVDIITHPGNPAYPIDIEAVAAAAAEYGVALEINNSSFEVSRKGSEANCTAIAKAAKELGATLVMGSDSHVAFSLGGFDRALSIIEAVDYPKDKLLNRSPMALLNFLTQRGHQSVADLMPLFSDDIA.

Positions 8, 10, 16, 41, 74, 102, 132, 193, and 195 each coordinate Zn(2+).

It belongs to the PHP family. Requires Zn(2+) as cofactor.

This chain is Probable phosphatase Shewana3_2794, found in Shewanella sp. (strain ANA-3).